Reading from the N-terminus, the 173-residue chain is T-cell surface glycoprotein CD3 delta chain (173 aa).

Residues 1 to 21 form the signal peptide; the sequence is MEHSGILASLILIAVLPQGSP. Topologically, residues 22 to 105 are extracellular; it reads FKIQVTEYED…CVELDSGTMA (84 aa). A disulfide bridge links Cys-37 with Cys-73. Asn-38, Asn-55, and Asn-74 each carry an N-linked (GlcNAc...) asparagine glycan. A helical transmembrane segment spans residues 106-126; the sequence is GVIFIDLIATLLLALGVYCFA. The Cytoplasmic portion of the chain corresponds to 127–173; it reads GHETGRPSGAAEVQALLKNEQLYQPLRDREDTQYSRLGGNWPRNKKS. The 29-residue stretch at 138-166 folds into the ITAM domain; the sequence is EVQALLKNEQLYQPLRDREDTQYSRLGGN. Phosphotyrosine occurs at positions 149 and 160.

As to quaternary structure, the TCR-CD3 complex is composed of a CD3D/CD3E and a CD3G/CD3E heterodimers that preferentially associate with TCRalpha and TCRbeta, respectively, to form TCRalpha/CD3E/CD3G and TCRbeta/CD3G/CD3E trimers. In turn, the hexamer interacts with CD3Z homodimer to form the TCR-CD3 complex. Alternatively, TCRalpha and TCRbeta can be replaced by TCRgamma and TCRdelta. Interacts with coreceptors CD4 and CD8. In terms of processing, phosphorylated on Tyr residues after T-cell receptor triggering by LCK in association with CD4/CD8.

The protein localises to the membrane. Functionally, part of the TCR-CD3 complex present on T-lymphocyte cell surface that plays an essential role in adaptive immune response. When antigen presenting cells (APCs) activate T-cell receptor (TCR), TCR-mediated signals are transmitted across the cell membrane by the CD3 chains CD3D, CD3E, CD3G and CD3Z. All CD3 chains contain immunoreceptor tyrosine-based activation motifs (ITAMs) in their cytoplasmic domain. Upon TCR engagement, these motifs become phosphorylated by Src family protein tyrosine kinases LCK and FYN, resulting in the activation of downstream signaling pathways. In addition of this role of signal transduction in T-cell activation, CD3D plays an essential role in thymocyte differentiation. Indeed, participates in correct intracellular TCR-CD3 complex assembly and surface expression. In absence of a functional TCR-CD3 complex, thymocytes are unable to differentiate properly. Interacts with CD4 and CD8 and thus serves to establish a functional link between the TCR and coreceptors CD4 and CD8, which is needed for activation and positive selection of CD4 or CD8 T-cells. This chain is T-cell surface glycoprotein CD3 delta chain (Cd3d), found in Mus musculus (Mouse).